Reading from the N-terminus, the 418-residue chain is PP2A regulatory subunit TAP46 (418 aa).

Residues 367 to 418 (KMIQESNSAWHKDGSRSAQEDEDAEEEKARAWDDWKDDNPRGAGNKKLTPCG) form a disordered region. Composition is skewed to basic and acidic residues over residues 376–385 (WHKDGSRSAQ) and 393–406 (EKARAWDDWKDDNP).

This sequence belongs to the IGBP1/TAP42 family.

In terms of biological role, involved in the regulation of the TOR signaling pathway. Seems to act as a regulator of PP2A catalytic activity. This is PP2A regulatory subunit TAP46 from Oryza sativa subsp. japonica (Rice).